Consider the following 132-residue polypeptide: Small ribosomal subunit protein uS8 (132 aa).

This sequence belongs to the universal ribosomal protein uS8 family. As to quaternary structure, part of the 30S ribosomal subunit. Contacts proteins S5 and S12.

Its function is as follows. One of the primary rRNA binding proteins, it binds directly to 16S rRNA central domain where it helps coordinate assembly of the platform of the 30S subunit. This chain is Small ribosomal subunit protein uS8, found in Aliarcobacter butzleri (strain RM4018) (Arcobacter butzleri).